The primary structure comprises 316 residues: Ornithine carbamoyltransferase (316 aa).

Carbamoyl phosphate-binding positions include 57 to 60 (STRT), Gln84, Arg108, and 135 to 138 (HPCQ). L-ornithine contacts are provided by residues Asn166, Asp230, and 234–235 (SM). Carbamoyl phosphate contacts are provided by residues 269–270 (CL) and Arg297.

The protein belongs to the aspartate/ornithine carbamoyltransferase superfamily. OTCase family.

It is found in the cytoplasm. It catalyses the reaction carbamoyl phosphate + L-ornithine = L-citrulline + phosphate + H(+). It participates in amino-acid biosynthesis; L-arginine biosynthesis; L-arginine from L-ornithine and carbamoyl phosphate: step 1/3. In terms of biological role, reversibly catalyzes the transfer of the carbamoyl group from carbamoyl phosphate (CP) to the N(epsilon) atom of ornithine (ORN) to produce L-citrulline. This is Ornithine carbamoyltransferase from Bacillus cereus (strain ZK / E33L).